Consider the following 249-residue polypeptide: 5'-nucleotidase SurE (249 aa).

The a divalent metal cation site is built by Asp8, Asp9, Ser39, and Asn91.

It belongs to the SurE nucleotidase family. The cofactor is a divalent metal cation.

The protein localises to the cytoplasm. It carries out the reaction a ribonucleoside 5'-phosphate + H2O = a ribonucleoside + phosphate. Its function is as follows. Nucleotidase that shows phosphatase activity on nucleoside 5'-monophosphates. This is 5'-nucleotidase SurE from Pseudomonas entomophila (strain L48).